Consider the following 341-residue polypeptide: HTH-type transcriptional repressor PurR (341 aa).

The HTH lacI-type domain maps to 2–56; it reads ATIKDVAKRANVSTTTVSHVINKTRFVAEETRNAVWAAIKELHYSPSAVARSLKV. Positions 4-23 form a DNA-binding region, H-T-H motif; the sequence is IKDVAKRANVSTTTVSHVIN. Residues 48–56 mediate DNA binding; sequence SAVARSLKV. Residues Y73, R190, T192, F221, and D275 each coordinate hypoxanthine.

Homodimer.

Its pathway is purine metabolism; purine nucleotide biosynthesis [regulation]. Functionally, is the main repressor of the genes involved in the de novo synthesis of purine nucleotides, regulating purB, purC, purEK, purF, purHD, purL, purMN and guaBA expression. PurR is allosterically activated to bind its cognate DNA by binding the purine corepressors, hypoxanthine or guanine, thereby effecting transcription repression. The polypeptide is HTH-type transcriptional repressor PurR (Salmonella typhimurium (strain LT2 / SGSC1412 / ATCC 700720)).